Consider the following 256-residue polypeptide: Hydroxyacylglutathione hydrolase (256 aa).

Zn(2+) is bound by residues H57, H59, D61, H62, H115, D134, and H172.

Belongs to the metallo-beta-lactamase superfamily. Glyoxalase II family. In terms of assembly, monomer. Zn(2+) serves as cofactor.

The catalysed reaction is an S-(2-hydroxyacyl)glutathione + H2O = a 2-hydroxy carboxylate + glutathione + H(+). It functions in the pathway secondary metabolite metabolism; methylglyoxal degradation; (R)-lactate from methylglyoxal: step 2/2. Functionally, thiolesterase that catalyzes the hydrolysis of S-D-lactoyl-glutathione to form glutathione and D-lactic acid. The protein is Hydroxyacylglutathione hydrolase of Jannaschia sp. (strain CCS1).